A 192-amino-acid polypeptide reads, in one-letter code: MKVQSFGERVVLFILNAIIFGRLERNLDDDDMFFLPHSVKEQAKILWRRGAAVGFYTTKMKGRLCGDGTGACYLLPVFDTVFIRRKHWHRGLGTAMLRDFCETFPEDEALGVSCSMSPAMYQAHPGNSEDVSRHARTSQNDRPRQPAPGDGSKERMCGEELEDTKDDPECGVEEEDAGLAGQPPGKLTRSSP.

A disordered region spans residues Y121 to P192. Residues E159–A177 are compositionally biased toward acidic residues.

The protein belongs to the FAM169 family.

This chain is Protein FAM169BP, found in Homo sapiens (Human).